The primary structure comprises 420 residues: UDP-N-acetyl-D-mannosamine dehydrogenase (420 aa).

Residues Y13, I14, D33, T85, and T126 each coordinate NAD(+). UDP-N-acetyl-alpha-D-mannosaminouronate-binding residues include R160, V161, K212, N216, R219, H250, R252, and G263. The Proton donor/acceptor role is filled by K212. C266 serves as the catalytic Nucleophile. The UDP-N-acetyl-alpha-D-mannosaminouronate site is built by F330 and K331. R338 lines the NAD(+) pocket. K416 lines the UDP-N-acetyl-alpha-D-mannosaminouronate pocket.

Belongs to the UDP-glucose/GDP-mannose dehydrogenase family. WecC subfamily. As to quaternary structure, homodimer.

It catalyses the reaction UDP-N-acetyl-alpha-D-mannosamine + 2 NAD(+) + H2O = UDP-N-acetyl-alpha-D-mannosaminouronate + 2 NADH + 3 H(+). It participates in bacterial outer membrane biogenesis; enterobacterial common antigen biosynthesis. In terms of biological role, catalyzes the four-electron oxidation of UDP-N-acetyl-D-mannosamine (UDP-ManNAc), reducing NAD(+) and releasing UDP-N-acetylmannosaminuronic acid (UDP-ManNAcA). This chain is UDP-N-acetyl-D-mannosamine dehydrogenase, found in Yersinia pestis.